The chain runs to 266 residues: Ribosomal RNA small subunit methyltransferase A (266 aa).

The S-adenosyl-L-methionine site is built by Asn-11, Leu-13, Gly-37, Glu-57, Asp-85, and Asn-104.

It belongs to the class I-like SAM-binding methyltransferase superfamily. rRNA adenine N(6)-methyltransferase family. RsmA subfamily.

It is found in the cytoplasm. The enzyme catalyses adenosine(1518)/adenosine(1519) in 16S rRNA + 4 S-adenosyl-L-methionine = N(6)-dimethyladenosine(1518)/N(6)-dimethyladenosine(1519) in 16S rRNA + 4 S-adenosyl-L-homocysteine + 4 H(+). Specifically dimethylates two adjacent adenosines (A1518 and A1519) in the loop of a conserved hairpin near the 3'-end of 16S rRNA in the 30S particle. May play a critical role in biogenesis of 30S subunits. The chain is Ribosomal RNA small subunit methyltransferase A from Campylobacter jejuni (strain RM1221).